Here is a 251-residue protein sequence, read N- to C-terminus: Zinc import ATP-binding protein ZnuC (251 aa).

Residues 5-220 form the ABC transporter domain; sequence VSLENVSVSF…PEFISMFGPR (216 aa). Position 37 to 44 (37 to 44) interacts with ATP; that stretch reads GPNGAGKS.

The protein belongs to the ABC transporter superfamily. Zinc importer (TC 3.A.1.15.5) family. The complex is composed of two ATP-binding proteins (ZnuC), two transmembrane proteins (ZnuB) and a solute-binding protein (ZnuA).

The protein resides in the cell inner membrane. It carries out the reaction Zn(2+)(out) + ATP(in) + H2O(in) = Zn(2+)(in) + ADP(in) + phosphate(in) + H(+)(in). Its function is as follows. Part of the ABC transporter complex ZnuABC involved in zinc import. Responsible for energy coupling to the transport system. The polypeptide is Zinc import ATP-binding protein ZnuC (Salmonella typhi).